Here is a 303-residue protein sequence, read N- to C-terminus: N-acetyl-D-glucosamine kinase (303 aa).

Residues 4–11 and 133–140 each bind ATP; these read GFDIGGTK and GVGGGLIF. The Zn(2+) site is built by H157, C177, C179, and C184.

It belongs to the ROK (NagC/XylR) family. NagK subfamily.

The catalysed reaction is N-acetyl-D-glucosamine + ATP = N-acetyl-D-glucosamine 6-phosphate + ADP + H(+). Its pathway is cell wall biogenesis; peptidoglycan recycling. Functionally, catalyzes the phosphorylation of N-acetyl-D-glucosamine (GlcNAc) derived from cell-wall degradation, yielding GlcNAc-6-P. The chain is N-acetyl-D-glucosamine kinase from Escherichia coli O9:H4 (strain HS).